Consider the following 406-residue polypeptide: Phosphorylase b kinase gamma catalytic chain, liver/testis isoform (406 aa).

Positions 24 to 291 (YDPKDVIGRG…AEQALQHPFF (268 aa)) constitute a Protein kinase domain. ATP contacts are provided by residues 30–38 (IGRGVSSVV) and Lys-53. Asp-153 (proton acceptor) is an active-site residue. The interval 306–330 (QRFRVAVWTVLAAGRVALSTHRVRP) is calmodulin-binding (domain-N). Ser-345 is subject to Phosphoserine. A calmodulin-binding (domain-C) region spans residues 346 to 370 (VRHLIDNCAFRLYGHWVKKGEQQNR).

Belongs to the protein kinase superfamily. CAMK Ser/Thr protein kinase family. As to quaternary structure, hexadecamer of 4 heterotetramers, each composed of alpha, beta, gamma, and delta subunits. Alpha (PHKA1 or PHKA2) and beta (PHKB) are regulatory subunits, gamma (PHKG1 or PHKG2) is the catalytic subunit, and delta is calmodulin.

It carries out the reaction 2 ATP + phosphorylase b = 2 ADP + phosphorylase a.. Its function is as follows. Catalytic subunit of the phosphorylase b kinase (PHK), which mediates the neural and hormonal regulation of glycogen breakdown (glycogenolysis) by phosphorylating and thereby activating glycogen phosphorylase. May regulate glycogeneolysis in the testis. In vitro, phosphorylates PYGM. The sequence is that of Phosphorylase b kinase gamma catalytic chain, liver/testis isoform (PHKG2) from Homo sapiens (Human).